The chain runs to 556 residues: Arginine--tRNA ligase (556 aa).

The 'HIGH' region motif lies at 132–142; sequence ANPTGDLHLGH.

This sequence belongs to the class-I aminoacyl-tRNA synthetase family. As to quaternary structure, monomer.

Its subcellular location is the cytoplasm. It catalyses the reaction tRNA(Arg) + L-arginine + ATP = L-arginyl-tRNA(Arg) + AMP + diphosphate. The polypeptide is Arginine--tRNA ligase (Listeria welshimeri serovar 6b (strain ATCC 35897 / DSM 20650 / CCUG 15529 / CIP 8149 / NCTC 11857 / SLCC 5334 / V8)).